Consider the following 329-residue polypeptide: 4-hydroxythreonine-4-phosphate dehydrogenase (329 aa).

His136 and Thr137 together coordinate substrate. A divalent metal cation contacts are provided by His166, His211, and His266. Residues Lys274, Asn283, and Arg292 each contribute to the substrate site.

Belongs to the PdxA family. Homodimer. Zn(2+) serves as cofactor. It depends on Mg(2+) as a cofactor. Requires Co(2+) as cofactor.

Its subcellular location is the cytoplasm. The enzyme catalyses 4-(phosphooxy)-L-threonine + NAD(+) = 3-amino-2-oxopropyl phosphate + CO2 + NADH. It participates in cofactor biosynthesis; pyridoxine 5'-phosphate biosynthesis; pyridoxine 5'-phosphate from D-erythrose 4-phosphate: step 4/5. Catalyzes the NAD(P)-dependent oxidation of 4-(phosphooxy)-L-threonine (HTP) into 2-amino-3-oxo-4-(phosphooxy)butyric acid which spontaneously decarboxylates to form 3-amino-2-oxopropyl phosphate (AHAP). The polypeptide is 4-hydroxythreonine-4-phosphate dehydrogenase (Escherichia coli (strain 55989 / EAEC)).